A 298-amino-acid chain; its full sequence is tRNA pseudouridine synthase B (298 aa).

Asp-39 (nucleophile) is an active-site residue.

It belongs to the pseudouridine synthase TruB family. Type 1 subfamily.

It catalyses the reaction uridine(55) in tRNA = pseudouridine(55) in tRNA. In terms of biological role, responsible for synthesis of pseudouridine from uracil-55 in the psi GC loop of transfer RNAs. This is tRNA pseudouridine synthase B from Lactobacillus delbrueckii subsp. bulgaricus (strain ATCC BAA-365 / Lb-18).